Here is a 193-residue protein sequence, read N- to C-terminus: Rho-related GTP-binding protein RhoA-D (193 aa).

GTP contacts are provided by residues 12–19 (GDGACGKT), 30–37 (FPEVYVPT), 59–63 (DTAGQ), 117–120 (NKKD), and 160–162 (SAK). Tyr-34 is a glycosylation site ((Microbial infection) O-linked (GlcNAc) tyrosine; by Yersinia Afp18). Position 190 is a cysteine methyl ester (Cys-190). Cys-190 carries the S-geranylgeranyl cysteine lipid modification. Positions 191–193 (LLL) are cleaved as a propeptide — removed in mature form.

This sequence belongs to the small GTPase superfamily. Rho family. (Microbial infection) Glycosylated at Tyr-34 by Yersinia ruckeri toxin Afp18. Mono-O-GlcNAcylation by Afp18 inhibits RhoA activation by guanine nucleotide exchange factors and blocks RhoA signaling.

It localises to the cell membrane. Regulates a signal transduction pathway linking plasma membrane receptors to the assembly of focal adhesions and actin stress fibers. This is Rho-related GTP-binding protein RhoA-D from Danio rerio (Zebrafish).